A 235-amino-acid chain; its full sequence is Ribonuclease 3 (235 aa).

The RNase III domain occupies 6-131 (IDQLFKLTGH…LIAVMYLDGG (126 aa)). Position 44 (glutamate 44) interacts with Mg(2+). The active site involves aspartate 48. Mg(2+) is bound by residues aspartate 117 and glutamate 120. Glutamate 120 is an active-site residue. The region spanning 156–225 (DAKTELQEWA…AEKILRREGV (70 aa)) is the DRBM domain.

The protein belongs to the ribonuclease III family. As to quaternary structure, homodimer. Requires Mg(2+) as cofactor.

Its subcellular location is the cytoplasm. It catalyses the reaction Endonucleolytic cleavage to 5'-phosphomonoester.. In terms of biological role, digests double-stranded RNA. Involved in the processing of primary rRNA transcript to yield the immediate precursors to the large and small rRNAs (23S and 16S). Processes some mRNAs, and tRNAs when they are encoded in the rRNA operon. Processes pre-crRNA and tracrRNA of type II CRISPR loci if present in the organism. In Bartonella tribocorum (strain CIP 105476 / IBS 506), this protein is Ribonuclease 3.